Here is a 164-residue protein sequence, read N- to C-terminus: Ecotin (164 aa).

The first 20 residues, 1–20, serve as a signal peptide directing secretion; that stretch reads MKMFVPAVVFAALASASAWA. A disulfide bond links Cys72 and Cys109.

It belongs to the protease inhibitor I11 (ecotin) family. In terms of assembly, homodimer.

The protein resides in the periplasm. General inhibitor of pancreatic serine proteases: inhibits chymotrypsin, trypsin, elastases, factor X, kallikrein as well as a variety of other proteases. In Salmonella typhi, this protein is Ecotin.